A 434-amino-acid chain; its full sequence is Trigger factor (434 aa).

The 86-residue stretch at 160–245 (GDKVKMNFVG…LTEVQAANLP (86 aa)) folds into the PPIase FKBP-type domain.

It belongs to the FKBP-type PPIase family. Tig subfamily.

It is found in the cytoplasm. It carries out the reaction [protein]-peptidylproline (omega=180) = [protein]-peptidylproline (omega=0). Involved in protein export. Acts as a chaperone by maintaining the newly synthesized protein in an open conformation. Functions as a peptidyl-prolyl cis-trans isomerase. This Shewanella baltica (strain OS185) protein is Trigger factor.